Consider the following 264-residue polypeptide: Ribonuclease HII (264 aa).

Positions 33-224 constitute an RNase H type-2 domain; sequence GPVAGVDEVG…VRRVASGSNT (192 aa). Residues aspartate 39, glutamate 40, and aspartate 133 each contribute to the a divalent metal cation site. A disordered region spans residues 222-264; sequence SNTAEVADGQPDPRDGTAQTGEGRWSKSSHPATMRATGRAQGT.

The protein belongs to the RNase HII family. It depends on Mn(2+) as a cofactor. The cofactor is Mg(2+).

It localises to the cytoplasm. It catalyses the reaction Endonucleolytic cleavage to 5'-phosphomonoester.. Endonuclease that specifically degrades the RNA of RNA-DNA hybrids. The chain is Ribonuclease HII from Mycobacterium bovis (strain ATCC BAA-935 / AF2122/97).